Consider the following 314-residue polypeptide: tRNA dimethylallyltransferase (314 aa).

14-21 (GPTASGKT) is an ATP binding site. 16 to 21 (TASGKT) provides a ligand contact to substrate. 3 interaction with substrate tRNA regions span residues 39–42 (DSAQ), 163–167 (QRLQR), and 245–250 (RCVGYR).

The protein belongs to the IPP transferase family. Monomer. Mg(2+) is required as a cofactor.

It carries out the reaction adenosine(37) in tRNA + dimethylallyl diphosphate = N(6)-dimethylallyladenosine(37) in tRNA + diphosphate. Its function is as follows. Catalyzes the transfer of a dimethylallyl group onto the adenine at position 37 in tRNAs that read codons beginning with uridine, leading to the formation of N6-(dimethylallyl)adenosine (i(6)A). This is tRNA dimethylallyltransferase from Dechloromonas aromatica (strain RCB).